Consider the following 291-residue polypeptide: Ribonuclease Z (291 aa).

His-61, His-63, Asp-65, His-66, His-133, Asp-201, and His-257 together coordinate Zn(2+). Asp-65 serves as the catalytic Proton acceptor.

The protein belongs to the RNase Z family. In terms of assembly, homodimer. Zn(2+) is required as a cofactor.

It carries out the reaction Endonucleolytic cleavage of RNA, removing extra 3' nucleotides from tRNA precursor, generating 3' termini of tRNAs. A 3'-hydroxy group is left at the tRNA terminus and a 5'-phosphoryl group is left at the trailer molecule.. Zinc phosphodiesterase, which displays some tRNA 3'-processing endonuclease activity. Probably involved in tRNA maturation, by removing a 3'-trailer from precursor tRNA. This is Ribonuclease Z from Saccharolobus islandicus (strain Y.N.15.51 / Yellowstone #2) (Sulfolobus islandicus).